We begin with the raw amino-acid sequence, 378 residues long: Acetylornithine deacetylase (378 aa).

His76 contributes to the Zn(2+) binding site. The active site involves Asp78. Residue Asp108 participates in Zn(2+) binding. Glu140 is a catalytic residue. Glu141, Glu165, and His351 together coordinate Zn(2+).

The protein belongs to the peptidase M20A family. ArgE subfamily. As to quaternary structure, homodimer. Zn(2+) serves as cofactor. Requires Co(2+) as cofactor. Glutathione is required as a cofactor.

The protein resides in the cytoplasm. It catalyses the reaction N(2)-acetyl-L-ornithine + H2O = L-ornithine + acetate. The protein operates within amino-acid biosynthesis; L-arginine biosynthesis; L-ornithine from N(2)-acetyl-L-ornithine (linear): step 1/1. In terms of biological role, catalyzes the hydrolysis of the amide bond of N(2)-acetylated L-amino acids. Cleaves the acetyl group from N-acetyl-L-ornithine to form L-ornithine, an intermediate in L-arginine biosynthesis pathway, and a branchpoint in the synthesis of polyamines. The chain is Acetylornithine deacetylase from Vibrio atlanticus (strain LGP32) (Vibrio splendidus (strain Mel32)).